The primary structure comprises 210 residues: Fibrillarin-like rRNA/tRNA 2'-O-methyltransferase (210 aa).

The segment at 1-34 (MTLPSGVERHDFGGETSLATQGQPVYGERTDGDW) is disordered. S-adenosyl-L-methionine is bound by residues 71 to 72 (TT), 87 to 88 (EF), 112 to 113 (DA), and 132 to 135 (DVAT).

This sequence belongs to the methyltransferase superfamily. Fibrillarin family. Interacts with nop5. Component of box C/D small ribonucleoprotein (sRNP) particles that contain rpl7ae, FlpA and nop5, plus a guide RNA.

Its function is as follows. Involved in pre-rRNA and tRNA processing. Utilizes the methyl donor S-adenosyl-L-methionine to catalyze the site-specific 2'-hydroxyl methylation of ribose moieties in rRNA and tRNA. Site specificity is provided by a guide RNA that base pairs with the substrate. Methylation occurs at a characteristic distance from the sequence involved in base pairing with the guide RNA. The chain is Fibrillarin-like rRNA/tRNA 2'-O-methyltransferase from Haloarcula marismortui (strain ATCC 43049 / DSM 3752 / JCM 8966 / VKM B-1809) (Halobacterium marismortui).